Here is a 131-residue protein sequence, read N- to C-terminus: Arsenate reductase 2 (131 aa).

Catalysis depends on nucleophile residues cysteine 10, cysteine 82, and cysteine 89. Cystine bridges form between cysteine 10–cysteine 82 and cysteine 82–cysteine 89.

This sequence belongs to the low molecular weight phosphotyrosine protein phosphatase family. Thioredoxin-coupled ArsC subfamily.

It localises to the cytoplasm. It carries out the reaction arsenate + [thioredoxin]-dithiol + H(+) = arsenite + [thioredoxin]-disulfide + H2O. Its function is as follows. Catalyzes the reduction of arsenate [As(V)] to arsenite [As(III)]. This is Arsenate reductase 2 from Staphylococcus epidermidis (strain ATCC 35984 / DSM 28319 / BCRC 17069 / CCUG 31568 / BM 3577 / RP62A).